An 88-amino-acid chain; its full sequence is Small ribosomal subunit protein bS20 (88 aa).

Disordered regions lie at residues 1–29 (MANT…SKLR) and 69–88 (KNTA…AMAA).

Belongs to the bacterial ribosomal protein bS20 family.

In terms of biological role, binds directly to 16S ribosomal RNA. The polypeptide is Small ribosomal subunit protein bS20 (Polynucleobacter asymbioticus (strain DSM 18221 / CIP 109841 / QLW-P1DMWA-1) (Polynucleobacter necessarius subsp. asymbioticus)).